A 95-amino-acid chain; its full sequence is Antitoxin VapB (95 aa).

In terms of biological role, antitoxin component of a type II toxin-antitoxin (TA) system. Partially neutralizes the RNase activity of cognate toxin VapC. The protein is Antitoxin VapB of Rickettsia bellii (strain RML369-C).